Consider the following 132-residue polypeptide: Large ribosomal subunit protein uL14 (132 aa).

It belongs to the universal ribosomal protein uL14 family. In terms of assembly, part of the 50S ribosomal subunit. Forms a cluster with proteins L3 and L24e, part of which may contact the 16S rRNA in 2 intersubunit bridges.

In terms of biological role, binds to 23S rRNA. Forms part of two intersubunit bridges in the 70S ribosome. The protein is Large ribosomal subunit protein uL14 of Methanosarcina mazei (strain ATCC BAA-159 / DSM 3647 / Goe1 / Go1 / JCM 11833 / OCM 88) (Methanosarcina frisia).